Reading from the N-terminus, the 550-residue chain is Complement control protein (550 aa).

The N-terminal stretch at 1–19 is a signal peptide; the sequence is MAFLRQTLWILWTFTMVIG. 4 consecutive Sushi domains span residues 23–83, 84–150, 151–209, and 210–268; these read EKCS…TCNK, KSCP…FCEK, EKCH…TCEL, and AGCK…KCVL. 8 disulfides stabilise this stretch: Cys-25–Cys-68, Cys-53–Cys-81, Cys-86–Cys-131, Cys-116–Cys-148, Cys-153–Cys-194, Cys-180–Cys-207, Cys-212–Cys-254, and Cys-240–Cys-266. Residues Asn-63 and Asn-111 are each glycosylated (N-linked (GlcNAc...) asparagine; by host). Asn-197 carries N-linked (GlcNAc...) asparagine; by host glycosylation. N-linked (GlcNAc...) asparagine; by host glycans are attached at residues Asn-255, Asn-275, and Asn-299. The disordered stretch occupies residues 269 to 338; that stretch reads EDIDDPNNSN…TSEGFNETTT (70 aa). Polar residues-rich tracts occupy residues 288–302 and 312–321; these read EKPNGNVFQRSNYTE and TAATCDTNCE. N-linked (GlcNAc...) asparagine; by host glycosylation is found at Asn-334, Asn-371, Asn-374, and Asn-378. 2 disordered regions span residues 387–408 and 420–516; these read TPTSQDDATPSIPSVQTPNYNT and IEEG…RPPA. Residues 424 to 440 show a composition bias toward polar residues; sequence PSNSTTSEKATASTLSH. Residues Asn-426, Asn-445, Asn-455, and Asn-483 are each glycosylated (N-linked (GlcNAc...) asparagine; by host). The span at 450 to 476 shows a compositional bias: polar residues; that stretch reads IYTTLNKTTQLPSTNKPTNSQAKSSTK. The segment covering 484 to 495 has biased composition (polar residues); sequence KTTSNPAISLTD. A helical transmembrane segment spans residues 528-548; the sequence is IGLLTAVALTCGLITLFHYLF.

It localises to the host membrane. Its subcellular location is the virion membrane. Its function is as follows. Inhibits the complement component of the host innate immune response. Regulates host C3 convertases, accelerating their decay, and acts as a cofactor for factor I degradation of C4b and C3b. Also binds heparin, and therefore may play two distinct roles when incorporated in virion membranes: immune evasion and host cell binding. The sequence is that of Complement control protein (ORF4) from Human herpesvirus 8 type P (isolate GK18) (HHV-8).